Here is a 469-residue protein sequence, read N- to C-terminus: Aspartyl/glutamyl-tRNA(Asn/Gln) amidotransferase subunit B (469 aa).

This sequence belongs to the GatB/GatE family. GatB subfamily. In terms of assembly, heterotrimer of A, B and C subunits.

The enzyme catalyses L-glutamyl-tRNA(Gln) + L-glutamine + ATP + H2O = L-glutaminyl-tRNA(Gln) + L-glutamate + ADP + phosphate + H(+). The catalysed reaction is L-aspartyl-tRNA(Asn) + L-glutamine + ATP + H2O = L-asparaginyl-tRNA(Asn) + L-glutamate + ADP + phosphate + 2 H(+). In terms of biological role, allows the formation of correctly charged Asn-tRNA(Asn) or Gln-tRNA(Gln) through the transamidation of misacylated Asp-tRNA(Asn) or Glu-tRNA(Gln) in organisms which lack either or both of asparaginyl-tRNA or glutaminyl-tRNA synthetases. The reaction takes place in the presence of glutamine and ATP through an activated phospho-Asp-tRNA(Asn) or phospho-Glu-tRNA(Gln). This chain is Aspartyl/glutamyl-tRNA(Asn/Gln) amidotransferase subunit B, found in Methanococcus maripaludis (strain C7 / ATCC BAA-1331).